The following is a 264-amino-acid chain: 3-methyl-2-oxobutanoate hydroxymethyltransferase (264 aa).

Positions 45 and 84 each coordinate Mg(2+). 3-methyl-2-oxobutanoate-binding positions include 45 to 46, Asp-84, and Lys-113; that span reads DS. A Mg(2+)-binding site is contributed by Glu-115. Catalysis depends on Glu-182, which acts as the Proton acceptor.

The protein belongs to the PanB family. In terms of assembly, homodecamer; pentamer of dimers. Requires Mg(2+) as cofactor.

The protein resides in the cytoplasm. It carries out the reaction 3-methyl-2-oxobutanoate + (6R)-5,10-methylene-5,6,7,8-tetrahydrofolate + H2O = 2-dehydropantoate + (6S)-5,6,7,8-tetrahydrofolate. It functions in the pathway cofactor biosynthesis; (R)-pantothenate biosynthesis; (R)-pantoate from 3-methyl-2-oxobutanoate: step 1/2. In terms of biological role, catalyzes the reversible reaction in which hydroxymethyl group from 5,10-methylenetetrahydrofolate is transferred onto alpha-ketoisovalerate to form ketopantoate. This chain is 3-methyl-2-oxobutanoate hydroxymethyltransferase, found in Caldicellulosiruptor saccharolyticus (strain ATCC 43494 / DSM 8903 / Tp8T 6331).